Here is a 427-residue protein sequence, read N- to C-terminus: Glutamate-1-semialdehyde 2,1-aminomutase (427 aa).

Lysine 265 is modified (N6-(pyridoxal phosphate)lysine).

Belongs to the class-III pyridoxal-phosphate-dependent aminotransferase family. HemL subfamily. As to quaternary structure, homodimer. Requires pyridoxal 5'-phosphate as cofactor.

Its subcellular location is the cytoplasm. It catalyses the reaction (S)-4-amino-5-oxopentanoate = 5-aminolevulinate. It functions in the pathway porphyrin-containing compound metabolism; protoporphyrin-IX biosynthesis; 5-aminolevulinate from L-glutamyl-tRNA(Glu): step 2/2. The polypeptide is Glutamate-1-semialdehyde 2,1-aminomutase (Marinomonas sp. (strain MWYL1)).